The following is a 240-amino-acid chain: Octanoyltransferase (240 aa).

Residues 31–216 (GQVGDTLLLL…HLCAVFDLEP (186 aa)) enclose the BPL/LPL catalytic domain. Substrate contacts are provided by residues 76 to 83 (RGGGATYH), 145 to 147 (AIG), and 159 to 161 (GLA). The active-site Acyl-thioester intermediate is Cys-177.

This sequence belongs to the LipB family.

It localises to the cytoplasm. The enzyme catalyses octanoyl-[ACP] + L-lysyl-[protein] = N(6)-octanoyl-L-lysyl-[protein] + holo-[ACP] + H(+). It functions in the pathway protein modification; protein lipoylation via endogenous pathway; protein N(6)-(lipoyl)lysine from octanoyl-[acyl-carrier-protein]: step 1/2. Functionally, catalyzes the transfer of endogenously produced octanoic acid from octanoyl-acyl-carrier-protein onto the lipoyl domains of lipoate-dependent enzymes. Lipoyl-ACP can also act as a substrate although octanoyl-ACP is likely to be the physiological substrate. The chain is Octanoyltransferase from Roseiflexus sp. (strain RS-1).